Reading from the N-terminus, the 173-residue chain is Acireductone dioxygenase (173 aa).

A disordered region spans residues 1–20 (MKVYEYDNSTEDQREDHDSG). 4 residues coordinate Fe(2+): histidine 81, histidine 83, glutamate 87, and histidine 126. Residues histidine 81, histidine 83, glutamate 87, and histidine 126 each coordinate Ni(2+).

Belongs to the acireductone dioxygenase (ARD) family. Fe(2+) serves as cofactor. It depends on Ni(2+) as a cofactor.

Its subcellular location is the cytoplasm. It is found in the nucleus. The enzyme catalyses 1,2-dihydroxy-5-(methylsulfanyl)pent-1-en-3-one + O2 = 4-methylsulfanyl-2-oxobutanoate + formate + 2 H(+). It carries out the reaction 1,2-dihydroxy-5-(methylsulfanyl)pent-1-en-3-one + O2 = 3-(methylsulfanyl)propanoate + CO + formate + 2 H(+). Its pathway is amino-acid biosynthesis; L-methionine biosynthesis via salvage pathway; L-methionine from S-methyl-5-thio-alpha-D-ribose 1-phosphate: step 5/6. Its function is as follows. Catalyzes 2 different reactions between oxygen and the acireductone 1,2-dihydroxy-3-keto-5-methylthiopentene (DHK-MTPene) depending upon the metal bound in the active site. Fe-containing acireductone dioxygenase (Fe-ARD) produces formate and 2-keto-4-methylthiobutyrate (KMTB), the alpha-ketoacid precursor of methionine in the methionine recycle pathway. Ni-containing acireductone dioxygenase (Ni-ARD) produces methylthiopropionate, carbon monoxide and formate, and does not lie on the methionine recycle pathway. In Tuber melanosporum (strain Mel28) (Perigord black truffle), this protein is Acireductone dioxygenase.